Consider the following 86-residue polypeptide: Small ribosomal subunit protein uS17 (86 aa).

This sequence belongs to the universal ribosomal protein uS17 family. In terms of assembly, part of the 30S ribosomal subunit.

In terms of biological role, one of the primary rRNA binding proteins, it binds specifically to the 5'-end of 16S ribosomal RNA. The polypeptide is Small ribosomal subunit protein uS17 (Streptococcus mutans serotype c (strain ATCC 700610 / UA159)).